We begin with the raw amino-acid sequence, 343 residues long: N-acetyl-gamma-glutamyl-phosphate reductase (343 aa).

The active site involves Cys148.

Belongs to the NAGSA dehydrogenase family. Type 1 subfamily.

The protein localises to the cytoplasm. It carries out the reaction N-acetyl-L-glutamate 5-semialdehyde + phosphate + NADP(+) = N-acetyl-L-glutamyl 5-phosphate + NADPH + H(+). It functions in the pathway amino-acid biosynthesis; L-arginine biosynthesis; N(2)-acetyl-L-ornithine from L-glutamate: step 3/4. Its function is as follows. Catalyzes the NADPH-dependent reduction of N-acetyl-5-glutamyl phosphate to yield N-acetyl-L-glutamate 5-semialdehyde. The sequence is that of N-acetyl-gamma-glutamyl-phosphate reductase from Caldicellulosiruptor saccharolyticus (strain ATCC 43494 / DSM 8903 / Tp8T 6331).